Consider the following 249-residue polypeptide: MRILISNDDGVNAPGIAALHQALADYAECVVIAPAEDRSGASSALTLDRPLHPMALSNGYISLNGTPTDCVHLGLNGLLEQTPDMVVSGINLGANLGDDVLYSGTVAAALEGRFLARPAFAFSLLSRLPDNLPTAAYFARKLVEAHERLELPPRTVLNVNVPNLPLEHIRGVQLTRLGHRARAAAPVKVVNPRGKEGYWIAAAGDVEDGSQGTDFHAVMQGYVSITPLRLDRTFNEALETMDGWLEGIF.

Residues aspartate 8, aspartate 9, serine 39, and asparagine 91 each coordinate a divalent metal cation.

The protein belongs to the SurE nucleotidase family. A divalent metal cation is required as a cofactor.

It localises to the cytoplasm. It carries out the reaction a ribonucleoside 5'-phosphate + H2O = a ribonucleoside + phosphate. Its function is as follows. Nucleotidase that shows phosphatase activity on nucleoside 5'-monophosphates. This is 5'-nucleotidase SurE from Ectopseudomonas mendocina (strain ymp) (Pseudomonas mendocina).